The primary structure comprises 277 residues: Diaminopimelate epimerase (277 aa).

Substrate is bound by residues N13, Q46, and N66. C75 serves as the catalytic Proton donor. Residues 76-77, N160, N193, and 211-212 each bind substrate; these read GN and ER. C220 acts as the Proton acceptor in catalysis. Position 221-222 (221-222) interacts with substrate; the sequence is GS.

Belongs to the diaminopimelate epimerase family. Homodimer.

Its subcellular location is the cytoplasm. It catalyses the reaction (2S,6S)-2,6-diaminopimelate = meso-2,6-diaminopimelate. The protein operates within amino-acid biosynthesis; L-lysine biosynthesis via DAP pathway; DL-2,6-diaminopimelate from LL-2,6-diaminopimelate: step 1/1. Its function is as follows. Catalyzes the stereoinversion of LL-2,6-diaminopimelate (L,L-DAP) to meso-diaminopimelate (meso-DAP), a precursor of L-lysine and an essential component of the bacterial peptidoglycan. The protein is Diaminopimelate epimerase of Legionella pneumophila subsp. pneumophila (strain Philadelphia 1 / ATCC 33152 / DSM 7513).